The following is a 387-amino-acid chain: Palmitoyltransferase ZDHHC16A (387 aa).

The next 2 membrane-spanning stretches (helical) occupy residues 73 to 93 (WFGM…VFIA) and 106 to 126 (SPGW…MIVF). Residues 150 to 200 (SVCKKCIIPKPARSHHCGICKTCILKMDHHCPWLNNCVGHFNHRYFFSFCL) enclose the DHHC domain. Residue Cys-180 is the S-palmitoyl cysteine intermediate of the active site. A run of 3 helical transmembrane segments spans residues 198 to 218 (FCLF…HLFI), 236 to 256 (GVPV…GVAG), and 281 to 301 (VIYM…LTLW).

Belongs to the DHHC palmitoyltransferase family. In terms of tissue distribution, expressed in the central nervous system (CNS). Expressed in the developing forebrain, and especially in the telencephalon.

It is found in the endoplasmic reticulum membrane. It catalyses the reaction L-cysteinyl-[protein] + hexadecanoyl-CoA = S-hexadecanoyl-L-cysteinyl-[protein] + CoA. Its function is as follows. Palmitoyl acyltransferase that mediates palmitoylation of proteins and is required during embryonic heart development. Involved in the proliferation of neural stem cells by regulating the FGF/ERK pathway. Involved in the proliferation of neural stem cells by regulating the FGF/ERK pathway. The protein is Palmitoyltransferase ZDHHC16A of Danio rerio (Zebrafish).